Here is a 226-residue protein sequence, read N- to C-terminus: MTTTELVALLHLASPALPIGAYSYSQGLEAALDANLIRDADSARDWIASGLTDVLAHGELPFLAHQLARWQTDDTHALAAENAWFVASRESAELRRETEQMGWSLAQLCASLEWGDAARRATLASLSPIALPTAFAYAAAAHDASADATLAAYAFGWVENQTSAALKAVPLGQLAGQRIIVALRGAIDAAVRRALATPPDAVNTFAPQLGILSARHETQYSRLFRS.

The protein belongs to the UreF family. As to quaternary structure, ureD, UreF and UreG form a complex that acts as a GTP-hydrolysis-dependent molecular chaperone, activating the urease apoprotein by helping to assemble the nickel containing metallocenter of UreC. The UreE protein probably delivers the nickel.

The protein localises to the cytoplasm. Its function is as follows. Required for maturation of urease via the functional incorporation of the urease nickel metallocenter. The sequence is that of Urease accessory protein UreF from Burkholderia cenocepacia (strain ATCC BAA-245 / DSM 16553 / LMG 16656 / NCTC 13227 / J2315 / CF5610) (Burkholderia cepacia (strain J2315)).